A 400-amino-acid chain; its full sequence is Haptoglobin (400 aa).

A signal peptide spans 1–18; the sequence is MSALPVVVTLLLCGQLLA. Sushi domains lie at 28-83 and 84-141; these read DSCP…ECED and ASCP…ECEA. Intrachain disulfides connect cysteine 49–cysteine 81, cysteine 105–cysteine 139, and cysteine 143–cysteine 260. In terms of domain architecture, Peptidase S1 spans 156–398; that stretch reads IIGGSLDAKG…ILDWVRKTIA (243 aa). 3 N-linked (GlcNAc...) asparagine glycosylation sites follow: asparagine 285, asparagine 309, and asparagine 315. Disulfide bonds link cysteine 303-cysteine 334 and cysteine 345-cysteine 375. An interaction with CD163 region spans residues 312 to 317; it reads VPENKT.

Belongs to the peptidase S1 family. In terms of assembly, tetramer of two alpha and two beta chains; disulfide-linked. The hemoglobin/haptoglobin complex is composed of a haptoglobin dimer bound to two hemoglobin alpha-beta dimers. Interacts with CD163. Interacts with ERGIC3. As to expression, expressed by the liver and secreted in plasma.

It localises to the secreted. It is found in the extracellular space. In terms of biological role, as a result of hemolysis, hemoglobin is found to accumulate in the kidney and is secreted in the urine. Haptoglobin captures, and combines with free plasma hemoglobin to allow hepatic recycling of heme iron and to prevent kidney damage. Haptoglobin also acts as an antioxidant, has antibacterial activity and plays a role in modulating many aspects of the acute phase response. Hemoglobin/haptoglobin complexes are rapidly cleared by the macrophage CD163 scavenger receptor expressed on the surface of liver Kupfer cells through an endocytic lysosomal degradation pathway. In Cervus elaphus (Red deer), this protein is Haptoglobin (HP).